A 938-amino-acid polypeptide reads, in one-letter code: Myocardin (938 aa).

The MEF2C-binding signature appears at 12–27 (IRSKFRSVLQLRLQQR). An RPEL 1 repeat occupies 18–43 (SVLQLRLQQRRTQEQLANQGIIPPLK). The span at 48–61 (FHEQRKHLDSDKAK) shows a compositional bias: basic and acidic residues. The interval 48-68 (FHEQRKHLDSDKAKNSLKRKA) is disordered. RPEL repeat units follow at residues 62–87 (NSLKRKARNRCNSADLVNMHILQAST) and 106–131 (DDLNEKIALRPGPLELVEKNILPVDS). The HDAC5-binding stretch occupies residues 153-205 (FEEDSSSDGLSPDQTRSEDPQNSAGSPPDAKASDTPSTGSLGTNQDLASGSEN). The disordered stretch occupies residues 154 to 281 (EEDSSSDGLS…DQKAEKSPPP (128 aa)). 3 stretches are compositionally biased toward polar residues: residues 159–177 (SDGLSPDQTRSEDPQNSAG), 186–203 (DTPSTGSLGTNQDLASGS), and 210–220 (SASQPSHQSDA). Over residues 248 to 265 (NRHKKPKDPKPKVKKLKY) the composition is skewed to basic residues. The SAP domain occupies 371 to 405 (LDDLKVSELRQQLRIRGLPVSGTKTALMDRLRPFQ). A phosphoserine; by GSK3-beta mark is found at serine 451, serine 455, serine 459, and serine 463. Residues 516-561 (EKDKMLVEKQKVINELTWKLQQEQRQVEELRMQLQKQKRNNCSEKK) are a coiled coil. A phosphoserine; by GSK3-beta mark is found at serine 626, serine 630, serine 634, and serine 638. Disordered stretches follow at residues 635-678 (PQHS…SSPI) and 693-734 (SDKV…MTRS). Over residues 699–715 (KFSIPSPTFSKSSSAIS) the composition is skewed to low complexity. The segment at 717–938 (VTQPPSYEDA…SSMDLHLQQW (222 aa)) is required for interaction with and ubiquitination by STUB1. Phosphoserine; by MAPK1 and MAPK3 occurs at positions 815, 862, and 869. At threonine 896 the chain carries Phosphothreonine; by MAPK1 and MAPK3.

Homodimer. Interacts with SRF, its association does not depend on specific DNA sequences for ternary complex formation. Interacts with MLLT7/FOXO4. Interacts (via C-terminal) with EP300 (via the CREB-binding domain). Interacts with HDAC4 and HDAC5. Interacts with MEF2C. Interacts (via C-terminus) with STUB1/CHIP. Interacts with PURB. Ubiquitinated; by STUB1/CHIP at the C-terminus, leading to its degradation by the proteasome. Phosphorylation by GSK3B is required for STUB1/CHIP-mediated ubiquitination. In terms of processing, phosphorylation negatively regulates the intrinsic myocardin transcriptional activity. Phosphorylated; by GSK3B. As to expression, expressed in the heart, aorta and bladder. Expressed in smooth muscle cell-containing tissues: stomach, small intestine, colon, lung, placenta and uterus. Very faint expression in prostate and skeletal muscle.

Its subcellular location is the nucleus. Functionally, smooth muscle cells (SM) and cardiac muscle cells-specific transcriptional factor which uses the canonical single or multiple CArG boxes DNA sequence. Acts as a cofactor of serum response factor (SRF) with the potential to modulate SRF-target genes. Plays a crucial role in cardiogenesis, urinary bladder development, and differentiation of the smooth muscle cell lineage (myogenesis). Positively regulates the transcription of genes involved in vascular smooth muscle contraction. This chain is Myocardin (MYOCD), found in Homo sapiens (Human).